The primary structure comprises 446 residues: Tol-Pal system protein TolB (446 aa).

The first 43 residues, 1–43 (MRKLWAPNWLSRRQNANPTRDQSRHALMAWLAAALMSAGAAHA), serve as a signal peptide directing secretion.

This sequence belongs to the TolB family. As to quaternary structure, the Tol-Pal system is composed of five core proteins: the inner membrane proteins TolA, TolQ and TolR, the periplasmic protein TolB and the outer membrane protein Pal. They form a network linking the inner and outer membranes and the peptidoglycan layer.

Its subcellular location is the periplasm. Part of the Tol-Pal system, which plays a role in outer membrane invagination during cell division and is important for maintaining outer membrane integrity. In Cupriavidus metallidurans (strain ATCC 43123 / DSM 2839 / NBRC 102507 / CH34) (Ralstonia metallidurans), this protein is Tol-Pal system protein TolB.